Consider the following 1029-residue polypeptide: Sodium/potassium-transporting ATPase subunit alpha-4 (1029 aa).

Residues 1–37 are disordered; sequence MGLWGKKGTVAPHDQSPRRRPKKGLIKKKMVKREKQK. The Cytoplasmic portion of the chain corresponds to 1–95; that stretch reads MGLWGKKGTV…NTVTPPPTTP (95 aa). Over residues 18–36 the composition is skewed to basic residues; sequence RRRPKKGLIKKKMVKREKQ. Residues 90-92 are interaction with phosphoinositide-3 kinase; it reads PPP. A helical transmembrane segment spans residues 96–116; it reads EWVKFCKQLFGGFSLLLWTGA. Topologically, residues 117–139 are extracellular; the sequence is ILCFVAYSIQIYFNEEPTKDNLY. Residues 140 to 160 form a helical membrane-spanning segment; it reads LSIVLSVVVIVTGCFSYYQEA. At 161-296 the chain is on the cytoplasmic side; it reads KSSKIMESFK…VGQTPIAAEI (136 aa). The segment covering 223–237 has biased composition (polar residues); the sequence is NSSLTGESEPQSRSP. The segment at 223–242 is disordered; that stretch reads NSSLTGESEPQSRSPDFTHE. A helical transmembrane segment spans residues 297 to 316; it reads EHFIHLITVVAVFLGVTFFA. The Extracellular portion of the chain corresponds to 317-328; that stretch reads LSLLLGYGWLEA. The chain crosses the membrane as a helical span at residues 329–346; that stretch reads IIFLIGIIVANVPEGLLA. The Cytoplasmic segment spans residues 347 to 778; it reads TVTVCLTLTA…EEGRLIFDNL (432 aa). Aspartate 384 (4-aspartylphosphate intermediate) is an active-site residue. Aspartate 723 and aspartate 727 together coordinate Mg(2+). The helical transmembrane segment at 779-798 threads the bilayer; the sequence is KKSIMYTLTSNIPEITPFLM. Residues 799–808 lie on the Extracellular side of the membrane; sequence FIILGIPLPL. The helical transmembrane segment at 809–829 threads the bilayer; that stretch reads GTITILCIDLGTDMVPAISLA. At 830-849 the chain is on the cytoplasmic side; that stretch reads YESAESDIMKRLPRNPKTDN. A helical transmembrane segment spans residues 850-872; that stretch reads LVNHRLIGMAYGQIGMIQALAGF. The Extracellular segment spans residues 873 to 924; that stretch reads FTYFVILAENGFRPVDLLGIRLHWEDKYLNDLEDSYGQQWTYEQRKVVEFTC. The helical transmembrane segment at 925-944 threads the bilayer; the sequence is QTAFFVTIVVVQWADLIISK. The Cytoplasmic segment spans residues 945 to 957; the sequence is TRRNSLFQQGMRN. Phosphoserine; by PKA is present on serine 949. A helical transmembrane segment spans residues 958-976; that stretch reads KVLIFGILEETLLAAFLSY. The Extracellular segment spans residues 977-991; that stretch reads TPGMDVALRMYPLKI. The helical transmembrane segment at 992-1012 threads the bilayer; the sequence is TWWLCAIPYSILIFVYDEIRK. At 1013–1029 the chain is on the cytoplasmic side; that stretch reads LLIRQHPDGWVERETYY.

It belongs to the cation transport ATPase (P-type) (TC 3.A.3) family. Type IIC subfamily. In terms of assembly, the sodium/potassium-transporting ATPase is composed of a catalytic alpha subunit, an auxiliary non-catalytic beta subunit and an additional regulatory subunit. As to expression, specifically expressed in testis. Found in very low levels in skeletal muscle. Expressed in mature sperm (at protein level).

It is found in the cell membrane. It catalyses the reaction K(+)(out) + Na(+)(in) + ATP + H2O = K(+)(in) + Na(+)(out) + ADP + phosphate + H(+). With respect to regulation, specifically inhibited by an endogenous cardiac glycoside, ouabain. Functionally, this is the catalytic component of the active enzyme, which catalyzes the hydrolysis of ATP coupled with the exchange of sodium and potassium ions across the plasma membrane. This action creates the electrochemical gradient of sodium and potassium ions, providing the energy for active transport of various nutrients. Plays a role in sperm motility. In Homo sapiens (Human), this protein is Sodium/potassium-transporting ATPase subunit alpha-4.